The chain runs to 251 residues: MLLIPAIDLKDGQCVRLKQGEMDDATVFSEDPAAMARHWIKQGARRLHLVDLNGAFAGKPKNGGAIRAITDEVGDDIPVQLGGGIRDLDTIEHYLDNGISYVIIGTAAVKNPGFLHDACGAFPGHIIVGLDAKDGKVAVDGWSKMTGHDVVDLAKKFEDYGVEAVIYTDIGRDGMLSGVNIEATVRLARALRIPVIASGGIASLTDIEALCAVEDEGIMGAITGRAIYEGTLDLSAAQSRADALRAPGGAA.

Asp-8 acts as the Proton acceptor in catalysis. Residue Asp-131 is the Proton donor of the active site.

This sequence belongs to the HisA/HisF family.

Its subcellular location is the cytoplasm. It catalyses the reaction 1-(5-phospho-beta-D-ribosyl)-5-[(5-phospho-beta-D-ribosylamino)methylideneamino]imidazole-4-carboxamide = 5-[(5-phospho-1-deoxy-D-ribulos-1-ylimino)methylamino]-1-(5-phospho-beta-D-ribosyl)imidazole-4-carboxamide. It functions in the pathway amino-acid biosynthesis; L-histidine biosynthesis; L-histidine from 5-phospho-alpha-D-ribose 1-diphosphate: step 4/9. In Azoarcus sp. (strain BH72), this protein is 1-(5-phosphoribosyl)-5-[(5-phosphoribosylamino)methylideneamino] imidazole-4-carboxamide isomerase.